The following is a 364-amino-acid chain: DNA polymerase IV (364 aa).

A UmuC domain is found at 14-198; sequence IIHIDMDAFF…LPVEKFHGVG (185 aa). Residues aspartate 18 and aspartate 116 each contribute to the Mg(2+) site. Glutamate 117 is a catalytic residue.

This sequence belongs to the DNA polymerase type-Y family. Monomer. Requires Mg(2+) as cofactor.

It is found in the cytoplasm. The catalysed reaction is DNA(n) + a 2'-deoxyribonucleoside 5'-triphosphate = DNA(n+1) + diphosphate. Functionally, poorly processive, error-prone DNA polymerase involved in untargeted mutagenesis. Copies undamaged DNA at stalled replication forks, which arise in vivo from mismatched or misaligned primer ends. These misaligned primers can be extended by PolIV. Exhibits no 3'-5' exonuclease (proofreading) activity. May be involved in translesional synthesis, in conjunction with the beta clamp from PolIII. The chain is DNA polymerase IV from Lactococcus lactis subsp. cremoris (strain MG1363).